Here is a 386-residue protein sequence, read N- to C-terminus: Citrate synthase (386 aa).

Catalysis depends on residues His266 and Asp322.

This sequence belongs to the citrate synthase family.

It carries out the reaction oxaloacetate + acetyl-CoA + H2O = citrate + CoA + H(+). The protein operates within carbohydrate metabolism; tricarboxylic acid cycle; isocitrate from oxaloacetate: step 1/2. This chain is Citrate synthase (gltA), found in Acidithiobacillus ferridurans.